The primary structure comprises 845 residues: Envelope glycoprotein B (845 aa).

A signal peptide spans 1 to 41 (MSFTDQTYTRSCMHTCITRDHRLYGIVIISLLLLLDNSVFC). Residues 42-727 (QNENKVIDIK…SGVASFLQNP (686 aa)) lie on the Virion surface side of the membrane. Disulfide bonds link Cys62-Cys523, Cys80-Cys479, Cys153-Cys218, Cys310-Cys358, and Cys552-Cys591. The segment at 120 to 126 (RYADVFS) is involved in fusion and/or binding to host membrane. Asn175 carries an N-linked (GlcNAc...) asparagine; by host glycan. The involved in fusion and/or binding to host membrane stretch occupies residues 204 to 212 (LPGTWLRKT). N-linked (GlcNAc...) asparagine; by host glycans are attached at residues Asn328, Asn388, Asn414, Asn420, Asn425, Asn564, and Asn632. A hydrophobic membrane proximal region region spans residues 677–725 (LEQAIVTKPYVPPAGMQQALQGLSGVGSVITGTLGAMQSLVSGVASFLQ). A helical membrane pass occupies residues 728 to 748 (FGGTLSIILIGCIIVGVIIIY). The Intravirion portion of the chain corresponds to 749–845 (NRMNQSRGSP…GYTTLSSMNI (97 aa)). Residues 837 to 840 (YTTL) carry the Internalization motif motif.

Belongs to the herpesviridae glycoprotein B family. Homotrimer; disulfide-linked. Binds to heparan sulfate proteoglycans. Interacts with gH/gL heterodimer. Post-translationally, a proteolytic cleavage by host furin generates two subunits that remain linked by disulfide bonds.

Its subcellular location is the virion membrane. The protein localises to the host cell membrane. The protein resides in the host endosome membrane. It is found in the host Golgi apparatus membrane. Envelope glycoprotein that forms spikes at the surface of virion envelope. Essential for the initial attachment to heparan sulfate moieties of the host cell surface proteoglycans. Involved in fusion of viral and cellular membranes leading to virus entry into the host cell. Following initial binding to its host receptors, membrane fusion is mediated by the fusion machinery composed at least of gB and the heterodimer gH/gL. May be involved in the fusion between the virion envelope and the outer nuclear membrane during virion egress. The polypeptide is Envelope glycoprotein B (Elephas maximus (Indian elephant)).